Here is a 238-residue protein sequence, read N- to C-terminus: Pyruvate formate-lyase-activating enzyme (238 aa).

The Radical SAM core domain occupies 15-236 (VDGPGIRTVV…KKLEKYLKEL (222 aa)). Positions 29, 33, and 36 each coordinate [4Fe-4S] cluster. S-adenosyl-L-methionine-binding positions include 35-37 (YCH), Gly-78, 126-128 (DIK), and His-199.

It belongs to the organic radical-activating enzymes family. Requires [4Fe-4S] cluster as cofactor.

The protein resides in the cytoplasm. The catalysed reaction is glycyl-[formate C-acetyltransferase] + reduced [flavodoxin] + S-adenosyl-L-methionine = glycin-2-yl radical-[formate C-acetyltransferase] + semiquinone [flavodoxin] + 5'-deoxyadenosine + L-methionine + H(+). Its function is as follows. Activation of pyruvate formate-lyase under anaerobic conditions by generation of an organic free radical, using S-adenosylmethionine and reduced flavodoxin as cosubstrates to produce 5'-deoxy-adenosine. The sequence is that of Pyruvate formate-lyase-activating enzyme (act) from Clostridium pasteurianum.